Consider the following 432-residue polypeptide: Asparagine--tRNA ligase (432 aa).

It belongs to the class-II aminoacyl-tRNA synthetase family. As to quaternary structure, homodimer.

It is found in the cytoplasm. The enzyme catalyses tRNA(Asn) + L-asparagine + ATP = L-asparaginyl-tRNA(Asn) + AMP + diphosphate + H(+). This Lacticaseibacillus paracasei (strain ATCC 334 / BCRC 17002 / CCUG 31169 / CIP 107868 / KCTC 3260 / NRRL B-441) (Lactobacillus paracasei) protein is Asparagine--tRNA ligase.